The chain runs to 226 residues: Leucyl/phenylalanyl-tRNA--protein transferase (226 aa).

The protein belongs to the L/F-transferase family.

It localises to the cytoplasm. It catalyses the reaction N-terminal L-lysyl-[protein] + L-leucyl-tRNA(Leu) = N-terminal L-leucyl-L-lysyl-[protein] + tRNA(Leu) + H(+). The enzyme catalyses N-terminal L-arginyl-[protein] + L-leucyl-tRNA(Leu) = N-terminal L-leucyl-L-arginyl-[protein] + tRNA(Leu) + H(+). The catalysed reaction is L-phenylalanyl-tRNA(Phe) + an N-terminal L-alpha-aminoacyl-[protein] = an N-terminal L-phenylalanyl-L-alpha-aminoacyl-[protein] + tRNA(Phe). Functionally, functions in the N-end rule pathway of protein degradation where it conjugates Leu, Phe and, less efficiently, Met from aminoacyl-tRNAs to the N-termini of proteins containing an N-terminal arginine or lysine. In Pseudomonas aeruginosa (strain LESB58), this protein is Leucyl/phenylalanyl-tRNA--protein transferase.